Consider the following 150-residue polypeptide: Retinal rod rhodopsin-sensitive cGMP 3',5'-cyclic phosphodiesterase subunit delta (150 aa).

The required for association with membranes stretch occupies residues 144–150; the sequence is RVRLFYV.

This sequence belongs to the PDE6D/unc-119 family. As to quaternary structure, interacts with the prenylated catalytic subunits of PDE6, an oligomer composed of two catalytic chains (PDE6A and PDE6B) and two inhibitory chains (gamma); has no effect on enzyme activity but promotes the release of the prenylated enzyme from cell membrane. Interacts with prenylated GRK1 and GRK7. Interacts with prenylated Ras family members, including RAP2A and RAP2C. Interacts with prenylated RHEB and NRAS. Interacts with prenylated HRAS and KRAS. Interacts with RAB13 (prenylated form); dissociates RAB13 from membranes. Interacts with prenylated INPP5E. Interacts with RAB28 (prenylated form); the interaction promotes RAB28 delivery to the photoreceptor outer segments. Interacts with RPGR. Interacts with ARL2. Interacts with ARL3; the interaction occurs specifically with the GTP-bound form of ARL3. Interaction with ARL2 and ARL3 promotes release of farnesylated cargo proteins. In terms of tissue distribution, widely expressed. Detected in various tissues including spleen, prostate gland, testis, ovary, small intestine, colon, retina, and peripheral blood.

The protein localises to the cytoplasm. The protein resides in the cytosol. It is found in the cytoplasmic vesicle membrane. It localises to the cytoskeleton. Its subcellular location is the cilium basal body. Promotes the release of prenylated target proteins from cellular membranes. Modulates the activity of prenylated or palmitoylated Ras family members by regulating their subcellular location. Required for normal ciliary targeting of farnesylated target proteins, such as INPP5E. Required for RAB28 localization to the cone cell outer segments in the retina. Modulates the subcellular location of target proteins by acting as a GTP specific dissociation inhibitor (GDI). Increases the affinity of ARL3 for GTP by several orders of magnitude. Stabilizes ARL3-GTP by decreasing the nucleotide dissociation rate. This chain is Retinal rod rhodopsin-sensitive cGMP 3',5'-cyclic phosphodiesterase subunit delta (PDE6D), found in Homo sapiens (Human).